The following is a 624-amino-acid chain: APC membrane recruitment protein 2 (624 aa).

2 disordered regions span residues 1–308 (MDSH…PPSE) and 342–596 (EDVG…IPVS). The span at 74–91 (SGKKEDAGGGEAQGKDAP) shows a compositional bias: basic and acidic residues. The segment covering 101–111 (SASSSVAKSHS) has biased composition (low complexity). 2 stretches are compositionally biased toward basic and acidic residues: residues 120–132 (GRPE…ENAE) and 247–258 (RRLEELCGERPD). Low complexity-rich tracts occupy residues 272–282 (ITGDIPITTIP) and 295–307 (AAAP…DPPS). A compositionally biased stretch (gly residues) spans 406–416 (TGGGGGGGGGT). The span at 450–464 (NNKEEQKGREKEQHE) shows a compositional bias: basic and acidic residues. The segment covering 535 to 549 (PITTTCSLKTPSSTV) has biased composition (polar residues).

Belongs to the Amer family.

Its subcellular location is the cell membrane. Its function is as follows. Negative regulator of the canonical Wnt signaling pathway involved in neuroectodermal patterning. Acts by specifically binding phosphatidylinositol 4,5-bisphosphate (PtdIns(4,5)P2), translocating to the cell membrane and interacting with key regulators of the canonical Wnt signaling pathway, such as components of the beta-catenin destruction complex. In Gallus gallus (Chicken), this protein is APC membrane recruitment protein 2 (AMER2).